The sequence spans 416 residues: Trehalose synthase (416 aa).

The protein belongs to the glycosyltransferase group 1 family. Glycosyltransferase 4 subfamily. In terms of assembly, homodimer. Mg(2+) serves as cofactor.

It catalyses the reaction an NDP-alpha-D-glucose + D-glucose = alpha,alpha-trehalose + a ribonucleoside 5'-diphosphate + H(+). Inhibited by 20 mM Fe(3+) and Mn(2+). Partially inhibited by Zn(2+) and Ni(2+). Activity is slightly enhanced by 2 mM Fe (3+), Mn (2+), Ca(2+) or Li(+) and by 20 mM Mg(2+), Ca(2+) or Li(+). Functionally, synthesizes trehalose from ADP-glucose and glucose. The reaction is reversible, the equilibrium strongly favors trehalose synthesis. The chain is Trehalose synthase from Rubrobacter xylanophilus (strain DSM 9941 / JCM 11954 / NBRC 16129 / PRD-1).